Reading from the N-terminus, the 407-residue chain is Complement decay-accelerating factor transmembrane isoform (407 aa).

The signal sequence occupies residues 1-39 (MVSSTWGYDPRAGAGDLVITTTAAGAVTIAVLLFQTVCG). Sushi domains follow at residues 40–101 (DCGP…FCEK), 102–165 (SCDT…FCKK), 166–227 (KSCP…VCTE), and 228–291 (IFCP…QCIE). Topologically, residues 40 to 368 (DCGPPPDIPN…NSGGDRYIYG (329 aa)) are extracellular. 8 disulfides stabilise this stretch: Cys-41–Cys-86, Cys-70–Cys-99, Cys-103–Cys-150, Cys-134–Cys-163, Cys-168–Cys-209, Cys-195–Cys-225, Cys-230–Cys-272, and Cys-258–Cys-289. A glycan (N-linked (GlcNAc...) asparagine) is linked at Asn-192. N-linked (GlcNAc...) asparagine glycosylation is present at Asn-267. Positions 301–361 (VVNVPSTGIP…STDKGESNSG (61 aa)) are disordered. Residues 306–324 (STGIPSTPQKPTTESVPNP) show a composition bias toward polar residues. Residues 343 to 357 (HEPDTTTRTSTDKGE) are compositionally biased toward basic and acidic residues. A helical transmembrane segment spans residues 369–389 (FVAVIAMIDSLIIVKTLWTIL). The Cytoplasmic segment spans residues 390–407 (SPNRRSDFQGKERKDVSK).

The protein belongs to the receptors of complement activation (RCA) family. As to expression, testis, spleen and lymph node.

The protein resides in the membrane. This protein recognizes C4b and C3b fragments that condense with cell-surface hydroxyl or amino groups when nascent C4b and C3b are locally generated during C4 and c3 activation. Interaction of daf with cell-associated C4b and C3b polypeptides interferes with their ability to catalyze the conversion of C2 and factor B to enzymatically active C2a and Bb and thereby prevents the formation of C4b2a and C3bBb, the amplification convertases of the complement cascade. Inhibits complement activation by destabilizing and preventing the formation of C3 and C5 convertases, which prevents complement damage. The protein is Complement decay-accelerating factor transmembrane isoform (Cd55b) of Mus musculus (Mouse).